Here is a 110-residue protein sequence, read N- to C-terminus: Proline-rich protein 15-like protein A (110 aa).

2 disordered regions span residues 29–51 (IAGD…TDSQ) and 65–110 (TKGR…KSGK). The segment covering 65 to 85 (TKGRHVKVSHSGRFKEKKRIR) has biased composition (basic residues). Residues 100 to 110 (TTANENNKSGK) show a composition bias toward polar residues.

The protein belongs to the PRR15 family.

This chain is Proline-rich protein 15-like protein A (prr15la), found in Danio rerio (Zebrafish).